We begin with the raw amino-acid sequence, 486 residues long: Lipase 1 (486 aa).

A disulfide bridge links Cys-58 with Cys-82. The active-site Acyl-ester intermediate is the Ser-193. The active-site Charge relay system is Asp-303. Residue Asn-332 is glycosylated (N-linked (GlcNAc...) asparagine). His-392 (charge relay system) is an active-site residue.

The protein belongs to the type-B carboxylesterase/lipase family.

It carries out the reaction a triacylglycerol + H2O = a diacylglycerol + a fatty acid + H(+). The protein is Lipase 1 (LIP1) of Yarrowia lipolytica (strain CLIB 122 / E 150) (Yeast).